Consider the following 692-residue polypeptide: Glycine--tRNA ligase beta subunit (692 aa).

Belongs to the class-II aminoacyl-tRNA synthetase family. As to quaternary structure, tetramer of two alpha and two beta subunits.

It is found in the cytoplasm. It catalyses the reaction tRNA(Gly) + glycine + ATP = glycyl-tRNA(Gly) + AMP + diphosphate. The sequence is that of Glycine--tRNA ligase beta subunit from Alteromonas mediterranea (strain DSM 17117 / CIP 110805 / LMG 28347 / Deep ecotype).